The following is a 143-amino-acid chain: Ribosome maturation factor RimP (143 aa).

It belongs to the RimP family.

Its subcellular location is the cytoplasm. Required for maturation of 30S ribosomal subunits. The sequence is that of Ribosome maturation factor RimP from Neisseria meningitidis serogroup C / serotype 2a (strain ATCC 700532 / DSM 15464 / FAM18).